The chain runs to 423 residues: UDP-N-acetylmuramoylalanine--D-glutamate ligase (423 aa).

An ATP-binding site is contributed by 112–118 (GSVGKST).

It belongs to the MurCDEF family.

The protein localises to the cytoplasm. It carries out the reaction UDP-N-acetyl-alpha-D-muramoyl-L-alanine + D-glutamate + ATP = UDP-N-acetyl-alpha-D-muramoyl-L-alanyl-D-glutamate + ADP + phosphate + H(+). It functions in the pathway cell wall biogenesis; peptidoglycan biosynthesis. In terms of biological role, cell wall formation. Catalyzes the addition of glutamate to the nucleotide precursor UDP-N-acetylmuramoyl-L-alanine (UMA). The sequence is that of UDP-N-acetylmuramoylalanine--D-glutamate ligase from Thermosipho africanus (strain TCF52B).